A 143-amino-acid polypeptide reads, in one-letter code: Anti-sigma F factor (143 aa).

Belongs to the anti-sigma-factor family.

The catalysed reaction is L-seryl-[protein] + ATP = O-phospho-L-seryl-[protein] + ADP + H(+). The enzyme catalyses L-threonyl-[protein] + ATP = O-phospho-L-threonyl-[protein] + ADP + H(+). Binds to sigma F and blocks its ability to form an RNA polymerase holoenzyme (E-sigma F). Phosphorylates SpoIIAA on a serine residue. This phosphorylation may enable SpoIIAA to act as an anti-anti-sigma factor that counteracts SpoIIAB and thus releases sigma F from inhibition. The sequence is that of Anti-sigma F factor from Caldanaerobacter subterraneus subsp. tengcongensis (strain DSM 15242 / JCM 11007 / NBRC 100824 / MB4) (Thermoanaerobacter tengcongensis).